Reading from the N-terminus, the 143-residue chain is MFMGEFDHQLDTKGRMIIPSKFRYDLNERFIITRGLDKCLFGYTLEEWQQIEEKMKTLPMTKKDARKFMRMFFSGAVEVELDKQGRINIPQNLRKYANLSKECTVIGVSNRIEIWDRETWNDFYDESEESFEDIAEDLIDFDF.

2 SpoVT-AbrB domains span residues 5-47 (EFDH…TLEE) and 76-119 (AVEV…DRET).

The protein belongs to the MraZ family. In terms of assembly, forms oligomers.

It is found in the cytoplasm. Its subcellular location is the nucleoid. The sequence is that of Transcriptional regulator MraZ from Staphylococcus epidermidis (strain ATCC 35984 / DSM 28319 / BCRC 17069 / CCUG 31568 / BM 3577 / RP62A).